A 457-amino-acid chain; its full sequence is tRNA modification GTPase MnmE (457 aa).

3 residues coordinate (6S)-5-formyl-5,6,7,8-tetrahydrofolate: arginine 25, glutamate 87, and arginine 126. Positions 223–377 (GIATAIIGRP…IEEKINQLFF (155 aa)) constitute a TrmE-type G domain. Residue asparagine 233 participates in K(+) binding. Residues 233-238 (NVGKSS), 252-258 (TDIAGTT), and 277-280 (DTAG) contribute to the GTP site. Serine 237 contributes to the Mg(2+) binding site. Residues threonine 252, isoleucine 254, and threonine 257 each coordinate K(+). Threonine 258 contributes to the Mg(2+) binding site. Lysine 457 serves as a coordination point for (6S)-5-formyl-5,6,7,8-tetrahydrofolate.

It belongs to the TRAFAC class TrmE-Era-EngA-EngB-Septin-like GTPase superfamily. TrmE GTPase family. In terms of assembly, homodimer. Heterotetramer of two MnmE and two MnmG subunits. Requires K(+) as cofactor.

Its subcellular location is the cytoplasm. Its function is as follows. Exhibits a very high intrinsic GTPase hydrolysis rate. Involved in the addition of a carboxymethylaminomethyl (cmnm) group at the wobble position (U34) of certain tRNAs, forming tRNA-cmnm(5)s(2)U34. This is tRNA modification GTPase MnmE from Streptococcus suis (strain 98HAH33).